We begin with the raw amino-acid sequence, 228 residues long: MSTLWADLGPSLLPAFWVTIKLTIYSAIGAMIFGTILTTMRVSPVKILRTLSTAYINTVRNTPLTLVVLFCSFGLYQNLGLTLAGRESSTFLVDNNFRLAVLGFILYTSTFVAESLRSGINTVHFGQAEAARSLGLGFGATFRSIIFPQAVRAAIVPLGNTLIALTKNTTIASVIGVGEASLLMKATIENHANMLFVVFAIFAVGFMILTLPMGLGLGKLSERLAVKK.

5 consecutive transmembrane segments (helical) span residues 16–36 (FWVTIKLTIYSAIGAMIFGTI), 64–84 (LTLVVLFCSFGLYQNLGLTLA), 100–120 (AVLGFILYTSTFVAESLRSGI), 145–165 (IIFPQAVRAAIVPLGNTLIAL), and 195–215 (LFVVFAIFAVGFMILTLPMGL). In terms of domain architecture, ABC transmembrane type-1 spans 16–217 (FWVTIKLTIY…ILTLPMGLGL (202 aa)).

Belongs to the binding-protein-dependent transport system permease family. HisMQ subfamily. The complex is composed of two ATP-binding proteins (GluA), two transmembrane proteins (GluC and GluD) and a solute-binding protein (GluB).

The protein resides in the cell membrane. Functionally, part of the ABC transporter complex GluABCD involved in glutamate uptake. Probably responsible for the translocation of the substrate across the membrane. The sequence is that of Glutamate transport system permease protein GluC from Corynebacterium glutamicum (strain ATCC 13032 / DSM 20300 / JCM 1318 / BCRC 11384 / CCUG 27702 / LMG 3730 / NBRC 12168 / NCIMB 10025 / NRRL B-2784 / 534).